The primary structure comprises 70 residues: Gas vesicle protein A (70 aa).

This sequence belongs to the gas vesicle GvpA family. The gas vesicle shell is 2 nm thick and consists of a single layer of this protein. It forms helical ribs nearly perpendicular to the long axis of the vesicle.

The protein resides in the gas vesicle shell. Functionally, gas vesicles are hollow, gas filled proteinaceous nanostructures found in some microorganisms. During planktonic growth they allow positioning of the organism at a favorable depth for light or nutrient acquisition. GvpA forms the protein shell. The chain is Gas vesicle protein A from Ancylobacter aquaticus.